We begin with the raw amino-acid sequence, 649 residues long: Threonine--tRNA ligase (649 aa).

The 63-residue stretch at M1–T63 folds into the TGS domain. The interval D245–P543 is catalytic. 3 residues coordinate Zn(2+): C339, H390, and H520.

The protein belongs to the class-II aminoacyl-tRNA synthetase family. Homodimer. Zn(2+) is required as a cofactor.

The protein resides in the cytoplasm. The enzyme catalyses tRNA(Thr) + L-threonine + ATP = L-threonyl-tRNA(Thr) + AMP + diphosphate + H(+). Its function is as follows. Catalyzes the attachment of threonine to tRNA(Thr) in a two-step reaction: L-threonine is first activated by ATP to form Thr-AMP and then transferred to the acceptor end of tRNA(Thr). Also edits incorrectly charged L-seryl-tRNA(Thr). The protein is Threonine--tRNA ligase of Ligilactobacillus salivarius (strain UCC118) (Lactobacillus salivarius).